Reading from the N-terminus, the 1756-residue chain is Transposon Ty1-BR Gag-Pol polyprotein (1756 aa).

3 stretches are compositionally biased toward polar residues: residues 1 to 10 (MESQQLSNYP), 48 to 60 (TKAN…TPAS), and 127 to 152 (QSQF…GNTF). 3 disordered regions span residues 1–93 (MESQ…MMTQ), 126–173 (PQSQ…RPPP), and 352–421 (GSRN…SKST). A compositionally biased stretch (low complexity) spans 153-165 (TDSSSADSDMTST). The RNA-binding stretch occupies residues 299-401 (NNGIHINNKV…NSKSKTARAH (103 aa)). The segment covering 402 to 418 (NVSTSNNSPSTDNDSIS) has biased composition (low complexity). Phosphoserine is present on Ser416. Asp461 acts as the For protease activity; shared with dimeric partner in catalysis. The interval 583 to 640 (NVHTSESTRKYPYPFIHRMLAHANAQTIRYSLKNNTITYFNESDVDWSSAIDYQCPDC) is integrase-type zinc finger-like. Residues 660-835 (NSYEPFQYLH…AGLDISTLLP (176 aa)) form the Integrase catalytic domain. Asp671 and Asp736 together coordinate Mg(2+). Disordered stretches follow at residues 956 to 1088 (SKAV…TEKR) and 1142 to 1173 (PTEL…SNAY). Over residues 960–969 (SPTDSTPPST) the composition is skewed to low complexity. 2 stretches are compositionally biased toward polar residues: residues 1005 to 1017 (STPQ…STDS) and 1031 to 1043 (MSQS…SYAS). Positions 1044–1053 (KSKDFRHSDS) are enriched in basic and acidic residues. A compositionally biased stretch (polar residues) spans 1054–1082 (YSDNETNHTNVPISSTGGTNNKTVPQTSE). Residues 1179–1213 (KKRSLEDNETEIKVSRDTWNTKNMRSLEPPRSKKR) carry the Bipartite nuclear localization signal motif. The region spanning 1339–1477 (NNYYITQLDI…DILGLEIKYQ (139 aa)) is the Reverse transcriptase Ty1/copia-type domain. Residues Asp1347, Asp1428, Asp1429, Asp1611, Glu1653, and Asp1686 each contribute to the Mg(2+) site. The region spanning 1611–1753 (DASYGNQPYY…IKTFKLLTNK (143 aa)) is the RNase H Ty1/copia-type domain.

As to quaternary structure, the capsid protein forms a homotrimer, from which the VLPs are assembled. The protease is a homodimer, whose active site consists of two apposed aspartic acid residues. In terms of processing, initially, virus-like particles (VLPs) are composed of the structural unprocessed proteins Gag and Gag-Pol, and also contain the host initiator methionine tRNA (tRNA(i)-Met) which serves as a primer for minus-strand DNA synthesis, and a dimer of genomic Ty RNA. Processing of the polyproteins occurs within the particle and proceeds by an ordered pathway, called maturation. First, the protease (PR) is released by autocatalytic cleavage of the Gag-Pol polyprotein yielding capsid protein p45 and a Pol-p154 precursor protein. This cleavage is a prerequisite for subsequent processing of Pol-p154 at the remaining sites to release the mature structural and catalytic proteins. Maturation takes place prior to the RT reaction and is required to produce transposition-competent VLPs.

It localises to the cytoplasm. It is found in the nucleus. The enzyme catalyses DNA(n) + a 2'-deoxyribonucleoside 5'-triphosphate = DNA(n+1) + diphosphate. It catalyses the reaction Endonucleolytic cleavage to 5'-phosphomonoester.. In terms of biological role, capsid protein (CA) is the structural component of the virus-like particle (VLP), forming the shell that encapsulates the retrotransposons dimeric RNA genome. The particles are assembled from trimer-clustered units and there are holes in the capsid shells that allow for the diffusion of macromolecules. CA also has nucleocapsid-like chaperone activity, promoting primer tRNA(i)-Met annealing to the multipartite primer-binding site (PBS), dimerization of Ty1 RNA and initiation of reverse transcription. Functionally, the aspartyl protease (PR) mediates the proteolytic cleavages of the Gag and Gag-Pol polyproteins after assembly of the VLP. Its function is as follows. Reverse transcriptase/ribonuclease H (RT) is a multifunctional enzyme that catalyzes the conversion of the retro-elements RNA genome into dsDNA within the VLP. The enzyme displays a DNA polymerase activity that can copy either DNA or RNA templates, and a ribonuclease H (RNase H) activity that cleaves the RNA strand of RNA-DNA heteroduplexes during plus-strand synthesis and hydrolyzes RNA primers. The conversion leads to a linear dsDNA copy of the retrotransposon that includes long terminal repeats (LTRs) at both ends. Integrase (IN) targets the VLP to the nucleus, where a subparticle preintegration complex (PIC) containing at least integrase and the newly synthesized dsDNA copy of the retrotransposon must transit the nuclear membrane. Once in the nucleus, integrase performs the integration of the dsDNA into the host genome. This Saccharomyces cerevisiae (strain ATCC 204508 / S288c) (Baker's yeast) protein is Transposon Ty1-BR Gag-Pol polyprotein (TY1B-BR).